A 205-amino-acid chain; its full sequence is uncharacterized protein (205 aa).

Residues 1 to 40 (MSAGKSYRKKMKQRRMNMKISKYALGILMLSLVFVLSACG) form the signal peptide. Residues 44-82 (STKESTHDNHSDSSTHEEMDHSGSADVPEGLQESKNPKY) are disordered. Over residues 47-66 (ESTHDNHSDSSTHEEMDHSG) the composition is skewed to basic and acidic residues.

This is an uncharacterized protein from Bacillus subtilis (strain 168).